The following is a 177-amino-acid chain: Large ribosomal subunit protein uL6 (177 aa).

The protein belongs to the universal ribosomal protein uL6 family. In terms of assembly, part of the 50S ribosomal subunit.

In terms of biological role, this protein binds to the 23S rRNA, and is important in its secondary structure. It is located near the subunit interface in the base of the L7/L12 stalk, and near the tRNA binding site of the peptidyltransferase center. This Polynucleobacter asymbioticus (strain DSM 18221 / CIP 109841 / QLW-P1DMWA-1) (Polynucleobacter necessarius subsp. asymbioticus) protein is Large ribosomal subunit protein uL6.